The sequence spans 777 residues: Zinc finger FYVE domain-containing protein 1 (777 aa).

Positions 416–777 (MAHSSFFPDE…FNCNKKPGDL (362 aa)) are required for localization in the lipid droplets. FYVE-type zinc fingers lie at residues 598 to 659 (NSQI…EARN) and 715 to 775 (DHEI…KKPG). Positions 604, 607, 620, 623, 628, 631, 651, 654, 721, 724, 737, 740, 745, 748, 767, and 770 each coordinate Zn(2+).

Interacts with RAB18 (in GTP-bound form). Interacts with BSCL2 in a RAB18-dependent manner. Interacts with ZW10. As to quaternary structure, (Microbial infection) Interacts with SARS coronavirus-2/SARS-CoV-2 non-structural protein 6 (nsp6); the interaction is independent of PtdIns3P-binding and leads to endoplasmic reticulum (ER) and double membrane vesicles (DMVs) binding to lipid droplets. As to expression, highly expressed in heart. Also detected in the testis. In terms of tissue distribution, expressed in all tissues examined, including, brain, placenta, lung, liver, skeletal muscle, pancreas and kidney. Highly expressed in heart.

The protein resides in the golgi apparatus. The protein localises to the golgi stack. It localises to the endoplasmic reticulum. Its subcellular location is the lipid droplet. It is found in the preautophagosomal structure. The protein resides in the mitochondrion. In terms of biological role, plays a role in the formation of lipid droplets (LDs) which are storage organelles at the center of lipid and energy homeostasis. Regulates the morphology, size and distribution of LDs. Mediates the formation of endoplasmic reticulum-lipid droplets (ER-LD) contacts by forming a complex with RAB18 and ZW10. Binds to phosphatidylinositol 3-phosphate (PtdIns3P) through FYVE-type zinc finger. Its function is as follows. (Microbial infection) Upon SARS coronavirus-2/SARS-CoV-2 infection, mediates through binding with non-structural protein 6 (nsp6) the replication organelle-lipid droplet association required to sustain viral replication. The polypeptide is Zinc finger FYVE domain-containing protein 1 (ZFYVE1) (Homo sapiens (Human)).